Here is a 136-residue protein sequence, read N- to C-terminus: Evasin P991 (136 aa).

The N-terminal stretch at 1-28 (MHSTIVYACLLALAVFVALHGTPLAALA) is a signal peptide. 7 N-linked (GlcNAc...) asparagine glycosylation sites follow: Asn-41, Asn-61, Asn-64, Asn-78, Asn-92, Asn-100, and Asn-122. 4 disulfide bridges follow: Cys-55/Cys-77, Cys-73/Cys-114, Cys-90/Cys-119, and Cys-109/Cys-128.

Its subcellular location is the secreted. In terms of biological role, salivary chemokine-binding protein which has chemokine-neutralizing activity and binds to host chemokines CCL2, CCL3, CCL3L1, CCL4, CCL4L1, CCL5, CCL6, CCL7, CCL8, CCL9, CCL11, CCL12, CCL13, CCL14, CCL16, CCL17, CCL18, CCL19, CCL22, CCL23, CCL24 and CCL27. This Amblyomma cajennense (Cayenne tick) protein is Evasin P991.